The primary structure comprises 487 residues: ATP synthase subunit beta (487 aa).

164–171 (GGAGVGKT) provides a ligand contact to ATP.

The protein belongs to the ATPase alpha/beta chains family. In terms of assembly, F-type ATPases have 2 components, CF(1) - the catalytic core - and CF(0) - the membrane proton channel. CF(1) has five subunits: alpha(3), beta(3), gamma(1), delta(1), epsilon(1). CF(0) has four main subunits: a(1), b(1), b'(1) and c(9-12).

The protein resides in the cellular thylakoid membrane. The enzyme catalyses ATP + H2O + 4 H(+)(in) = ADP + phosphate + 5 H(+)(out). In terms of biological role, produces ATP from ADP in the presence of a proton gradient across the membrane. The catalytic sites are hosted primarily by the beta subunits. This is ATP synthase subunit beta from Synechococcus sp. (strain CC9605).